A 236-amino-acid polypeptide reads, in one-letter code: NAD(P)H-hydrate epimerase (236 aa).

Positions 11 to 217 (AAALDQELMS…AIASKYGFEV (207 aa)) constitute a YjeF N-terminal domain. 61–65 (NNGGD) contributes to the (6S)-NADPHX binding site. K(+)-binding residues include Asn-62 and Asp-123. Residues 127–133 (GFSFSGE) and Asp-156 each bind (6S)-NADPHX. Ser-159 serves as a coordination point for K(+).

The protein belongs to the NnrE/AIBP family. K(+) serves as cofactor.

It localises to the cytoplasm. It is found in the mitochondrion. It carries out the reaction (6R)-NADHX = (6S)-NADHX. The catalysed reaction is (6R)-NADPHX = (6S)-NADPHX. Functionally, catalyzes the epimerization of the S- and R-forms of NAD(P)HX, a damaged form of NAD(P)H that is a result of enzymatic or heat-dependent hydration. This is a prerequisite for the S-specific NAD(P)H-hydrate dehydratase to allow the repair of both epimers of NAD(P)HX. The sequence is that of NAD(P)H-hydrate epimerase from Fusarium vanettenii (strain ATCC MYA-4622 / CBS 123669 / FGSC 9596 / NRRL 45880 / 77-13-4) (Fusarium solani subsp. pisi).